A 345-amino-acid polypeptide reads, in one-letter code: Adenosine kinase 2 (345 aa).

Residue Asp-300 is part of the active site.

It belongs to the carbohydrate kinase PfkB family. Interacts with the begomovirus AL2 protein and the curtovirus L2 protein. Interacts with KIN11. The cofactor is Mg(2+). In terms of processing, phosphorylated by KIN11. As to expression, widely expressed.

The protein localises to the cytoplasm. The catalysed reaction is adenosine + ATP = AMP + ADP + H(+). It participates in purine metabolism; AMP biosynthesis via salvage pathway; AMP from adenosine: step 1/1. With respect to regulation, inactivated by the begomovirus AL2 protein or the curtovirus L2 protein. Its function is as follows. ATP dependent phosphorylation of adenosine and other related nucleoside analogs to monophosphate derivatives. Essential to sustain methyl recycling. The protein is Adenosine kinase 2 of Arabidopsis thaliana (Mouse-ear cress).